A 187-amino-acid polypeptide reads, in one-letter code: MDFFTDQVKKKFSDKKPESSDPEPNHNKNKPGHTEPTTHKPGHGEPTTHKPVSNTDPTTHRPATNAELMASAKIVAEAAQAAARHESDKLDKAKVAGATADILDAASRYGKLDEKSGVGQYLEKAEQYLHKYETSHSHSSTGGTGSHGNVGGHGGGAGAPAAKKEDEKSGGGHGFGDYAKMAQGFMK.

The residue at position 1 (M1) is an N-acetylmethionine. Disordered regions lie at residues 1 to 66 (MDFF…ATNA) and 132 to 176 (YETS…HGFG). Residues 7–48 (QVKKKFSDKKPESSDPEPNHNKNKPGHTEPTTHKPGHGEPTT) show a composition bias toward basic and acidic residues. A compositionally biased stretch (gly residues) spans 142–158 (GGTGSHGNVGGHGGGAG).

As to quaternary structure, interacts with RPS2. As to expression, expressed in roots, leaves, flowers and siliques.

Prevents accumulation of abscisic acid (ABA) after heat treatment, thus reducing thermotolerance. May be a negative regulator of the ABA signaling/synthesis pathway. Required for defense responses against avirulent bacteria such as P.syringae pv. tomato DC3000 (avrRpt2). In Arabidopsis thaliana (Mouse-ear cress), this protein is Nodulin-related protein 1.